The sequence spans 59 residues: Bdellastasin (59 aa).

5 disulfide bridges follow: C10-C21, C15-C26, C28-C48, C33-C52, and C37-C54. The 27-residue stretch at 28-54 (CSDLHCKVKCEHGFKKDDNGCEYACIC) folds into the Antistasin-like domain.

It localises to the secreted. Strong inhibitor of mammalian trypsin, plasmin and acrosin. This Hirudo medicinalis (Medicinal leech) protein is Bdellastasin.